The following is a 421-amino-acid chain: NAD-specific glutamate dehydrogenase (421 aa).

Positions 71 and 95 each coordinate substrate. The active-site Proton donor is lysine 107. Threonine 191 and asparagine 222 together coordinate NAD(+). Serine 355 is a binding site for substrate.

The protein belongs to the Glu/Leu/Phe/Val dehydrogenases family. As to quaternary structure, homohexamer.

It catalyses the reaction L-glutamate + NAD(+) + H2O = 2-oxoglutarate + NH4(+) + NADH + H(+). The protein is NAD-specific glutamate dehydrogenase (gluD) of Clostridioides difficile (Peptoclostridium difficile).